The sequence spans 112 residues: Ribosome-binding factor A (112 aa).

It belongs to the RbfA family. Monomer. Binds 30S ribosomal subunits, but not 50S ribosomal subunits or 70S ribosomes.

It localises to the cytoplasm. In terms of biological role, one of several proteins that assist in the late maturation steps of the functional core of the 30S ribosomal subunit. Associates with free 30S ribosomal subunits (but not with 30S subunits that are part of 70S ribosomes or polysomes). Required for efficient processing of 16S rRNA. May interact with the 5'-terminal helix region of 16S rRNA. This Mycoplasma genitalium (strain ATCC 33530 / DSM 19775 / NCTC 10195 / G37) (Mycoplasmoides genitalium) protein is Ribosome-binding factor A.